The sequence spans 224 residues: Cytidylate kinase (224 aa).

11 to 19 (GPAAAGKST) provides a ligand contact to ATP.

Belongs to the cytidylate kinase family. Type 1 subfamily.

Its subcellular location is the cytoplasm. It carries out the reaction CMP + ATP = CDP + ADP. It catalyses the reaction dCMP + ATP = dCDP + ADP. This chain is Cytidylate kinase, found in Listeria innocua serovar 6a (strain ATCC BAA-680 / CLIP 11262).